The chain runs to 398 residues: Metalloprotease MmpA (398 aa).

A Zn(2+)-binding site is contributed by His-22. The active site involves Glu-23. Zn(2+) is bound at residue His-26. Helical transmembrane passes span Phe-117–Val-139, Gln-316–Leu-338, and Ala-362–Trp-381. The PDZ domain maps to Ala-130–Asp-203.

The protein belongs to the peptidase M50B family. Zn(2+) serves as cofactor.

It is found in the cell inner membrane. Its function is as follows. Involved in the regulated intramembrane proteolysis (RIP) of the short isoform of PodJ protein (PodJS), during the swarmer-to-stalked transition. The cleavage occurs near or within the single transmembrane of PodJS thereby releasing the N-terminal segment into the cytoplasm for subsequent degradation. It contributes to preserve asymmetry in the next cell cycle through sequential degradation. The sequence is that of Metalloprotease MmpA (mmpA) from Caulobacter vibrioides (strain ATCC 19089 / CIP 103742 / CB 15) (Caulobacter crescentus).